The primary structure comprises 620 residues: Glutathione-regulated potassium-efflux system protein KefC (620 aa).

Helical transmembrane passes span 4–24 (HTLV…PIAV), 26–46 (LGLG…LWGL), 54–74 (SILH…GLEL), 90–110 (GALQ…LLGL), 114–134 (VAEL…MQAM), 149–169 (FAVL…IPLL), 178–198 (MGAF…VVLL), 218–238 (VFSA…EEVG), 270–290 (GLLL…GTLI), 294–314 (LRIV…LWLI), 327–347 (WFAV…GAAQ), and 359–379 (SLTL…VILN). In terms of domain architecture, RCK N-terminal spans 399–518 (QPRVIIAGFG…AGVEKPERET (120 aa)). Residues 597 to 620 (GWQGTEEGKHTGNMADEPETKPSS) form a disordered region.

The protein belongs to the monovalent cation:proton antiporter 2 (CPA2) transporter (TC 2.A.37) family. KefC subfamily. As to quaternary structure, homodimer. Interacts with the regulatory subunit KefF.

It localises to the cell inner membrane. Its function is as follows. Pore-forming subunit of a potassium efflux system that confers protection against electrophiles. Catalyzes K(+)/H(+) antiport. This is Glutathione-regulated potassium-efflux system protein KefC from Shigella flexneri serotype 5b (strain 8401).